Consider the following 290-residue polypeptide: MRNKSQSFISSKLIFICCSILVLFILFLKRASFSSNSTATIRDEYHQKSKCPSTPQQCTKLPTSLSDALVHYVTSEITPQQTFDEVSVSKRVLDKKSPCNFLVFGLGHDSLMWASLNHGGRTLFLEEDEAWIETVTKKFPNLESYHVVYDTKVKDSNKLMELKRTEDCKAVSDPRDSKCALSLKGFPADVYETQWDVIMVDAPTGYHDEAPGRMSAIYTAGLLARNRYDGGETDVFVHDINRPVEDEFSVAFLCGGYMKEQQGRLRHFNIPSHRASFGTPFCPADISRRF.

Residues 8–28 (FISSKLIFICCSILVLFILFL) form a helical membrane-spanning segment.

The protein belongs to the methyltransferase superfamily. As to expression, expressed in roots, rosette leaves and stems.

Its subcellular location is the golgi apparatus membrane. It catalyses the reaction glucuronoxylan D-glucuronate + n S-adenosyl-L-methionine = glucuronoxylan 4-O-methyl-D-glucuronate + n S-adenosyl-L-homocysteine + n H(+). Methyltransferase catalyzing 4-O-methylation of glucuronic acid side chains on xylan. The polypeptide is Glucuronoxylan 4-O-methyltransferase 2 (GXM2) (Arabidopsis thaliana (Mouse-ear cress)).